A 379-amino-acid polypeptide reads, in one-letter code: tRNA(Met) cytidine acetate ligase (379 aa).

Residues 8 to 21 (IAEF…HEYL), G97, N153, and R176 contribute to the ATP site.

It belongs to the TmcAL family.

The protein localises to the cytoplasm. The catalysed reaction is cytidine(34) in elongator tRNA(Met) + acetate + ATP = N(4)-acetylcytidine(34) in elongator tRNA(Met) + AMP + diphosphate. Functionally, catalyzes the formation of N(4)-acetylcytidine (ac(4)C) at the wobble position of elongator tRNA(Met), using acetate and ATP as substrates. First activates an acetate ion to form acetyladenylate (Ac-AMP) and then transfers the acetyl group to tRNA to form ac(4)C34. The sequence is that of tRNA(Met) cytidine acetate ligase from Lactococcus lactis subsp. cremoris (strain MG1363).